Consider the following 208-residue polypeptide: Harpin secretion protein HrpW (208 aa).

The next 4 helical transmembrane spans lie at leucine 2–phenylalanine 22, alanine 46–isoleucine 66, isoleucine 149–leucine 169, and valine 176–tryptophan 196.

Belongs to the FliP/MopC/SpaP family.

It is found in the cell membrane. Its function is as follows. Required for the secretion of harpin. The protein is Harpin secretion protein HrpW (hrpW) of Pseudomonas syringae pv. syringae.